A 95-amino-acid polypeptide reads, in one-letter code: Aspartyl/glutamyl-tRNA(Asn/Gln) amidotransferase subunit C (95 aa).

It belongs to the GatC family. As to quaternary structure, heterotrimer of A, B and C subunits.

It carries out the reaction L-glutamyl-tRNA(Gln) + L-glutamine + ATP + H2O = L-glutaminyl-tRNA(Gln) + L-glutamate + ADP + phosphate + H(+). It catalyses the reaction L-aspartyl-tRNA(Asn) + L-glutamine + ATP + H2O = L-asparaginyl-tRNA(Asn) + L-glutamate + ADP + phosphate + 2 H(+). Its function is as follows. Allows the formation of correctly charged Asn-tRNA(Asn) or Gln-tRNA(Gln) through the transamidation of misacylated Asp-tRNA(Asn) or Glu-tRNA(Gln) in organisms which lack either or both of asparaginyl-tRNA or glutaminyl-tRNA synthetases. The reaction takes place in the presence of glutamine and ATP through an activated phospho-Asp-tRNA(Asn) or phospho-Glu-tRNA(Gln). The protein is Aspartyl/glutamyl-tRNA(Asn/Gln) amidotransferase subunit C of Alcanivorax borkumensis (strain ATCC 700651 / DSM 11573 / NCIMB 13689 / SK2).